Reading from the N-terminus, the 496-residue chain is ATP-dependent protease ATPase subunit HslU2 (496 aa).

The N-terminal 10 residues, 1–10, are a transit peptide targeting the mitochondrion; it reads MIRFSWVRLC. ATP is bound by residues valine 51 and 94–99; that span reads GVGKTE. Residues 177–191 are compositionally biased toward low complexity; that stretch reads GSFGSSTRNSGSGDS. Residues 177–204 are disordered; the sequence is GSFGSSTRNSGSGDSSAEEDKNSSSRDN. 3 residues coordinate ATP: aspartate 308, glutamate 374, and arginine 446.

Belongs to the ClpX chaperone family. HslU subfamily. In terms of assembly, a double ring-shaped homohexamer of HslV is capped on each side by a ring-shaped HslU homohexamer. The assembly of the HslU/HslV complex (HslVU) is dependent on binding of ATP.

Its subcellular location is the mitochondrion matrix. It is found in the kinetoplast. In terms of biological role, ATPase subunit of a proteasome-like degradation complex; this subunit has chaperone activity. The binding of ATP and its subsequent hydrolysis by HslU are essential for unfolding of protein substrates subsequently hydrolyzed by HslV. HslU recognizes the N-terminal part of its protein substrates and unfolds these before they are guided to HslV for hydrolysis. The HslVU protease complex functions in mitochondrial DNA replication by regulating DNA helicase PIF2 protein levels. This chain is ATP-dependent protease ATPase subunit HslU2 (HslU2), found in Trypanosoma brucei brucei (strain 927/4 GUTat10.1).